The following is a 347-amino-acid chain: MRPIMLVGHERPLTQVKYNKEGDLVFSCSKDSVASVWYSINGERLGTLEGHTGTIWSIDVDPFTESCVTGSADYSIKVWKVQTGTVIHTWTAPVPIKRVEFSPCGDYILAVLDDVMRYPGSINVYKVSRDPVTKEIKEFVEEPILVINTQENHKGVTVAGWSAEGKYIIACHKDGKVSKYNAKTGEFITSIELHTQTIGDIQFSPDRTYFITSSRDSMAYILDVESMEQLKSYEADCPLNSACITPLKEFVILGGGQAARDVTTTSAREGKFEARFYHKIFEDEIGRVKGHFGPLNYVAVNPQGTSYTSGGEDGFARIHHFEKSYFDFKYDVEKAAEAKEHMQTASA.

WD repeat units follow at residues 8-47 (GHER…RLGT), 50-89 (GHTG…VIHT), 91-135 (TAPV…VTKE), 151-190 (ENHK…FITS), 193-232 (LHTQ…QLKS), and 290-329 (GHFG…FDFK).

The protein belongs to the eIF-3 subunit I family. Component of the eukaryotic translation initiation factor 3 (eIF-3) complex.

The protein resides in the cytoplasm. Its function is as follows. Component of the eukaryotic translation initiation factor 3 (eIF-3) complex, which is involved in protein synthesis of a specialized repertoire of mRNAs and, together with other initiation factors, stimulates binding of mRNA and methionyl-tRNAi to the 40S ribosome. The eIF-3 complex specifically targets and initiates translation of a subset of mRNAs involved in cell proliferation. This Vanderwaltozyma polyspora (strain ATCC 22028 / DSM 70294 / BCRC 21397 / CBS 2163 / NBRC 10782 / NRRL Y-8283 / UCD 57-17) (Kluyveromyces polysporus) protein is Eukaryotic translation initiation factor 3 subunit I.